The following is a 331-amino-acid chain: Aspartate carbamoyltransferase catalytic subunit (331 aa).

Positions 62 and 63 each coordinate carbamoyl phosphate. Position 90 (lysine 90) interacts with L-aspartate. Carbamoyl phosphate is bound by residues arginine 112, histidine 145, and glutamine 148. The L-aspartate site is built by arginine 185 and arginine 246. 2 residues coordinate carbamoyl phosphate: glycine 287 and proline 288.

Belongs to the aspartate/ornithine carbamoyltransferase superfamily. ATCase family. As to quaternary structure, heterododecamer (2C3:3R2) of six catalytic PyrB chains organized as two trimers (C3), and six regulatory PyrI chains organized as three dimers (R2).

It catalyses the reaction carbamoyl phosphate + L-aspartate = N-carbamoyl-L-aspartate + phosphate + H(+). Its pathway is pyrimidine metabolism; UMP biosynthesis via de novo pathway; (S)-dihydroorotate from bicarbonate: step 2/3. Its function is as follows. Catalyzes the condensation of carbamoyl phosphate and aspartate to form carbamoyl aspartate and inorganic phosphate, the committed step in the de novo pyrimidine nucleotide biosynthesis pathway. The polypeptide is Aspartate carbamoyltransferase catalytic subunit (Synechocystis sp. (strain ATCC 27184 / PCC 6803 / Kazusa)).